We begin with the raw amino-acid sequence, 542 residues long: CTP synthase (542 aa).

The amidoligase domain stretch occupies residues 1-265 (MTRYIFVTGG…DDFVVERFGL (265 aa)). Residue serine 13 participates in CTP binding. A UTP-binding site is contributed by serine 13. Residues 14-19 (SLGKGI) and aspartate 71 each bind ATP. The Mg(2+) site is built by aspartate 71 and glutamate 139. Residues 146–148 (DIE), 186–191 (KTKPTQ), and lysine 222 contribute to the CTP site. Residues 186 to 191 (KTKPTQ) and lysine 222 each bind UTP. The Glutamine amidotransferase type-1 domain occupies 290–541 (TIAMVGKYME…VKAALAQKNK (252 aa)). Residue glycine 351 participates in L-glutamine binding. The Nucleophile; for glutamine hydrolysis role is filled by cysteine 378. L-glutamine-binding positions include 379 to 382 (LGMQ), glutamate 402, and arginine 469. Active-site residues include histidine 514 and glutamate 516.

The protein belongs to the CTP synthase family. As to quaternary structure, homotetramer.

The enzyme catalyses UTP + L-glutamine + ATP + H2O = CTP + L-glutamate + ADP + phosphate + 2 H(+). It catalyses the reaction L-glutamine + H2O = L-glutamate + NH4(+). The catalysed reaction is UTP + NH4(+) + ATP = CTP + ADP + phosphate + 2 H(+). Its pathway is pyrimidine metabolism; CTP biosynthesis via de novo pathway; CTP from UDP: step 2/2. Allosterically activated by GTP, when glutamine is the substrate; GTP has no effect on the reaction when ammonia is the substrate. The allosteric effector GTP functions by stabilizing the protein conformation that binds the tetrahedral intermediate(s) formed during glutamine hydrolysis. Inhibited by the product CTP, via allosteric rather than competitive inhibition. Functionally, catalyzes the ATP-dependent amination of UTP to CTP with either L-glutamine or ammonia as the source of nitrogen. Regulates intracellular CTP levels through interactions with the four ribonucleotide triphosphates. This is CTP synthase from Pseudomonas putida (strain GB-1).